The sequence spans 337 residues: Endochitinase 37 (337 aa).

The first 25 residues, 1-25, serve as a signal peptide directing secretion; it reads MTRLLDASFLLLPVIASTLFGTASA. The GH18 domain occupies 38–337; the sequence is KVLQGYWENW…GSKNWTFGDN (300 aa). The Proton donor role is filled by Glu160. Asn331 is a glycosylation site (N-linked (GlcNAc...) asparagine).

Belongs to the glycosyl hydrolase 18 family. Chitinase class V subfamily. As to quaternary structure, monomer.

Its subcellular location is the secreted. It carries out the reaction Random endo-hydrolysis of N-acetyl-beta-D-glucosaminide (1-&gt;4)-beta-linkages in chitin and chitodextrins.. Functionally, secreted chitinase involved in the degradation of chitin, a component of the cell walls of fungi and exoskeletal elements of some animals (including worms and arthropods). Plays a morphogenetic role during apical growth, cell division and differentiation (cell wall morphogenesis). May be involved in the degradation and further assimilation of phytopathogenic fungi, namely mycoparasitism, the major mechanism accounting for the antagonistic activity against phytopathogenic fungi displayed by Trichoderma. The sequence is that of Endochitinase 37 (chit37) from Trichoderma harzianum (Hypocrea lixii).